A 186-amino-acid chain; its full sequence is Photosystem I assembly protein Ycf4 (186 aa).

A run of 2 helical transmembrane segments spans residues 26–46 (WATIIFIGALGFLLAGLSSYF) and 66–86 (IVMTFYGSIGVFLSLFLWLTI).

The protein belongs to the Ycf4 family.

The protein resides in the plastid. The protein localises to the chloroplast thylakoid membrane. Functionally, seems to be required for the assembly of the photosystem I complex. This chain is Photosystem I assembly protein Ycf4, found in Pyropia yezoensis (Susabi-nori).